A 217-amino-acid chain; its full sequence is Oxygen-evolving enhancer protein 3, chloroplastic (217 aa).

Disordered stretches follow at residues 1–25 (MAQA…RRAG) and 73–95 (PIKL…SDQA). The transit peptide at 1-63 (MAQAMASMTG…ATGIAGGALA (63 aa)) directs the protein to the chloroplast.

Belongs to the PsbQ family.

It is found in the plastid. Its subcellular location is the chloroplast thylakoid membrane. The polypeptide is Oxygen-evolving enhancer protein 3, chloroplastic (Oryza sativa subsp. indica (Rice)).